Consider the following 293-residue polypeptide: HTH-type transcriptional regulator ArgP (293 aa).

Residues 4 to 60 (PDYRTLQALDAVIRERGFERAAQKLCITQSAVSQRIKQLENLFGQPLLVRTIPPHPT) form the HTH lysR-type domain. A DNA-binding region (H-T-H motif) is located at residues 21–40 (FERAAQKLCITQSAVSQRIK).

Belongs to the LysR transcriptional regulatory family. Homodimer.

Controls the transcription of genes involved in arginine and lysine metabolism. This chain is HTH-type transcriptional regulator ArgP, found in Sodalis glossinidius (strain morsitans).